A 424-amino-acid polypeptide reads, in one-letter code: Histidine--tRNA ligase (424 aa).

Belongs to the class-II aminoacyl-tRNA synthetase family. Homodimer.

It localises to the cytoplasm. It carries out the reaction tRNA(His) + L-histidine + ATP = L-histidyl-tRNA(His) + AMP + diphosphate + H(+). The chain is Histidine--tRNA ligase from Shigella boydii serotype 18 (strain CDC 3083-94 / BS512).